The chain runs to 240 residues: Arginine transport ATP-binding protein ArtM (240 aa).

An ABC transporter domain is found at 2–236; sequence IKVEKLSKSF…PKSKRAQDFL (235 aa). Residue 34-41 coordinates ATP; the sequence is GPSGSGKS.

Belongs to the ABC transporter superfamily.

Its subcellular location is the cell membrane. Part of a binding-protein-dependent transport system for arginine. Probably responsible for energy coupling to the transport system. The polypeptide is Arginine transport ATP-binding protein ArtM (artM) (Bacillus subtilis (strain 168)).